The primary structure comprises 321 residues: tRNA(Ile)-lysidine synthase (321 aa).

21-26 (SYGSDS) lines the ATP pocket.

Belongs to the tRNA(Ile)-lysidine synthase family.

The protein localises to the cytoplasm. The enzyme catalyses cytidine(34) in tRNA(Ile2) + L-lysine + ATP = lysidine(34) in tRNA(Ile2) + AMP + diphosphate + H(+). Ligates lysine onto the cytidine present at position 34 of the AUA codon-specific tRNA(Ile) that contains the anticodon CAU, in an ATP-dependent manner. Cytidine is converted to lysidine, thus changing the amino acid specificity of the tRNA from methionine to isoleucine. This is tRNA(Ile)-lysidine synthase from Campylobacter jejuni (strain RM1221).